The following is a 981-amino-acid chain: Mineralocorticoid receptor (981 aa).

Positions 1–603 (METKGYHSLP…STGSSRPSKI (603 aa)) are modulating. Residues 234–258 (SLTCSPSVENRGSRSHSPTHASNVG) show a composition bias toward polar residues. 2 disordered regions span residues 234 to 331 (SLTC…ASTV) and 355 to 376 (AIQD…VPFP). Residues Ser250, Ser259, Ser283, Ser287, and Ser299 each carry the phosphoserine modification. 2 stretches are compositionally biased toward low complexity: residues 259-300 (SPLS…VSSP) and 309-327 (SVSS…SSPT). Zn(2+)-binding residues include Cys604, Cys607, Cys621, Cys624, Cys640, Cys646, Cys656, and Cys659. NR C4-type zinc fingers lie at residues 604–624 (CLVC…CGSC) and 640–664 (CAGR…LQKC). Positions 604–669 (CLVCGDEASG…RLQKCLQAGM (66 aa)) form a DNA-binding region, nuclear receptor. The hinge stretch occupies residues 670–722 (NLGARKSKKLGKLKGLHEEQPQQPPPPPPQSPEEGTTYIAPTKEPSVNSALVP). A disordered region spans residues 684–710 (GLHEEQPQQPPPPPPQSPEEGTTYIAP). The span at 691–700 (QQPPPPPPQS) shows a compositional bias: pro residues. An NR LBD domain is found at 723–961 (QLTSITHALT…EFPAMLVEII (239 aa)). 21-hydroxyprogesterone is bound by residues Asn767 and Gln773. Aldosterone-binding residues include Asn767 and Gln773. Residues Asn767 and Gln773 each coordinate progesterone. The tract at residues 779–782 (KWAK) is important for coactivator binding. 2 residues coordinate 21-hydroxyprogesterone: Arg814 and Thr942. Residues Arg814 and Thr942 each coordinate aldosterone. The progesterone site is built by Arg814 and Thr942.

This sequence belongs to the nuclear hormone receptor family. NR3 subfamily. As to quaternary structure, heteromultimeric cytoplasmic complex with HSP90, HSP70, and FKBP4, in the absence of ligand. After ligand binding, it translocates to the nucleus and binds to DNA as a homodimer and as a heterodimer with NR3C1. Binds the coactivator NCOA2. May interact with HSD11B2 in the absence of ligand. Binds the coactivators NCOA1, TIF1 and NRIP1. Post-translationally, phosphorylated. Detected in liver, brain, heart, kidney, colon, aorta, hippocampus, hypothalamus and adrenal fasciculata.

The protein resides in the cytoplasm. Its subcellular location is the nucleus. It is found in the endoplasmic reticulum membrane. Receptor for both mineralocorticoids (MC) such as aldosterone and glucocorticoids (GC) such as corticosterone or cortisol. Binds to mineralocorticoid response elements (MRE) and transactivates target genes. The effect of MC is to increase ion and water transport and thus raise extracellular fluid volume and blood pressure and lower potassium levels. This Rattus norvegicus (Rat) protein is Mineralocorticoid receptor (Nr3c2).